Consider the following 164-residue polypeptide: C-phycoerythrin alpha chain (164 aa).

(2R,3E)-phycoerythrobilin contacts are provided by Cys-82 and Cys-139.

It belongs to the phycobiliprotein family. In terms of assembly, heterodimer of an alpha and a beta chain. Contains two covalently linked bilin chromophores.

Its subcellular location is the cellular thylakoid membrane. In terms of biological role, light-harvesting photosynthetic bile pigment-protein from the phycobiliprotein complex. This is C-phycoerythrin alpha chain (cpeA) from Pseudanabaena tenuis (strain PCC 7409).